Consider the following 492-residue polypeptide: Trigger factor (492 aa).

Residues Gly-164–Ala-249 enclose the PPIase FKBP-type domain. Residues Glu-440–Glu-492 form a disordered region. Basic and acidic residues predominate over residues Ser-445 to Pro-463. Positions Lys-464 to Ala-482 are enriched in basic residues. Residues Pro-483–Glu-492 show a composition bias toward basic and acidic residues.

The protein belongs to the FKBP-type PPIase family. Tig subfamily.

The protein resides in the cytoplasm. It carries out the reaction [protein]-peptidylproline (omega=180) = [protein]-peptidylproline (omega=0). Functionally, involved in protein export. Acts as a chaperone by maintaining the newly synthesized protein in an open conformation. Functions as a peptidyl-prolyl cis-trans isomerase. In Zymomonas mobilis subsp. mobilis (strain ATCC 31821 / ZM4 / CP4), this protein is Trigger factor.